We begin with the raw amino-acid sequence, 481 residues long: UDP-glycosyltransferase 85C2 (481 aa).

His23 (proton acceptor) is an active-site residue. An an anthocyanidin-binding site is contributed by His23. Residue Asp120 is the Charge relay of the active site. Thr143, Gln362, His377, Trp380, Ser382, Glu385, Asp401, and Gln402 together coordinate UDP-alpha-D-glucose.

This sequence belongs to the UDP-glycosyltransferase family.

The enzyme catalyses steviol + UDP-alpha-D-glucose = steviolmonoside + UDP + H(+). The catalysed reaction is steviolmonoside + UDP-alpha-D-glucose = rubusoside + UDP. In terms of biological role, involved in the biosynthesis of steviol glycosides in leaves. Converts steviol to the mono-glycoside steviolmonoside. Converts the mono-glycoside steviolmonoside to the bi-glycoside rubusoside. The sequence is that of UDP-glycosyltransferase 85C2 from Stevia rebaudiana (Stevia).